The following is a 205-amino-acid chain: RNA pyrophosphohydrolase (205 aa).

Residues 6-149 enclose the Nudix hydrolase domain; that stretch reads GFRPNVGIVL…KRGVYARALR (144 aa). Residues 38–59 carry the Nudix box motif; the sequence is GGMNTDETPVEAMYRELREETG. The segment at 178–205 is disordered; sequence GSSAAGHDRPRKRPRKRGGVLPVRINND. Positions 186 to 195 are enriched in basic residues; the sequence is RPRKRPRKRG.

The protein belongs to the Nudix hydrolase family. RppH subfamily. It depends on a divalent metal cation as a cofactor.

Accelerates the degradation of transcripts by removing pyrophosphate from the 5'-end of triphosphorylated RNA, leading to a more labile monophosphorylated state that can stimulate subsequent ribonuclease cleavage. In Xanthomonas campestris pv. campestris (strain 8004), this protein is RNA pyrophosphohydrolase.